The following is a 616-amino-acid chain: Dihydroxy-acid dehydratase (616 aa).

Residue aspartate 81 participates in Mg(2+) binding. Cysteine 122 provides a ligand contact to [2Fe-2S] cluster. Mg(2+)-binding residues include aspartate 123 and lysine 124. N6-carboxylysine is present on lysine 124. Cysteine 195 provides a ligand contact to [2Fe-2S] cluster. Position 491 (glutamate 491) interacts with Mg(2+). The active-site Proton acceptor is the serine 517.

This sequence belongs to the IlvD/Edd family. Homodimer. [2Fe-2S] cluster serves as cofactor. Requires Mg(2+) as cofactor.

It catalyses the reaction (2R)-2,3-dihydroxy-3-methylbutanoate = 3-methyl-2-oxobutanoate + H2O. The catalysed reaction is (2R,3R)-2,3-dihydroxy-3-methylpentanoate = (S)-3-methyl-2-oxopentanoate + H2O. The protein operates within amino-acid biosynthesis; L-isoleucine biosynthesis; L-isoleucine from 2-oxobutanoate: step 3/4. It functions in the pathway amino-acid biosynthesis; L-valine biosynthesis; L-valine from pyruvate: step 3/4. In terms of biological role, functions in the biosynthesis of branched-chain amino acids. Catalyzes the dehydration of (2R,3R)-2,3-dihydroxy-3-methylpentanoate (2,3-dihydroxy-3-methylvalerate) into 2-oxo-3-methylpentanoate (2-oxo-3-methylvalerate) and of (2R)-2,3-dihydroxy-3-methylbutanoate (2,3-dihydroxyisovalerate) into 2-oxo-3-methylbutanoate (2-oxoisovalerate), the penultimate precursor to L-isoleucine and L-valine, respectively. This is Dihydroxy-acid dehydratase from Sodalis glossinidius (strain morsitans).